Consider the following 344-residue polypeptide: Meiotic recombination protein DMC1 homolog (344 aa).

Positions Met-1–Asp-22 are disordered. Gly-133–Thr-140 is a binding site for ATP. Arg-235 lines the dsDNA pocket. SsDNA contacts are provided by Arg-235, Phe-238, Arg-241, Arg-247, and Arg-315. DsDNA is bound by residues Arg-241 and Arg-247.

This sequence belongs to the RecA family. DMC1 subfamily. As to quaternary structure, double stacked ring-shaped homooctamer. Interacts with BRCA2A and BRCA2B. In terms of tissue distribution, expressed in mitotic and/or meiotic tissues. Expressed in roots, leaves and anthers and carpels of young fower buds.

It localises to the nucleus. In terms of biological role, may participate in meiotic recombination, specifically in homologous strand assimilation, which is required for the resolution of meiotic double-strand breaks. Mediates interhomolog recombination during meiosis. In Arabidopsis thaliana (Mouse-ear cress), this protein is Meiotic recombination protein DMC1 homolog.